Consider the following 216-residue polypeptide: Ribosome maturation factor RimP (216 aa).

This sequence belongs to the RimP family.

The protein resides in the cytoplasm. In terms of biological role, required for maturation of 30S ribosomal subunits. This chain is Ribosome maturation factor RimP, found in Bartonella henselae (strain ATCC 49882 / DSM 28221 / CCUG 30454 / Houston 1) (Rochalimaea henselae).